Reading from the N-terminus, the 338-residue chain is RNA 3'-terminal phosphate cyclase (338 aa).

ATP is bound by residues Gln-103 and 283–287 (YLADQ). The active-site Tele-AMP-histidine intermediate is the His-308.

Belongs to the RNA 3'-terminal cyclase family. Type 1 subfamily.

Its subcellular location is the cytoplasm. It catalyses the reaction a 3'-end 3'-phospho-ribonucleotide-RNA + ATP = a 3'-end 2',3'-cyclophospho-ribonucleotide-RNA + AMP + diphosphate. Functionally, catalyzes the conversion of 3'-phosphate to a 2',3'-cyclic phosphodiester at the end of RNA. The mechanism of action of the enzyme occurs in 3 steps: (A) adenylation of the enzyme by ATP; (B) transfer of adenylate to an RNA-N3'P to produce RNA-N3'PP5'A; (C) and attack of the adjacent 2'-hydroxyl on the 3'-phosphorus in the diester linkage to produce the cyclic end product. The biological role of this enzyme is unknown but it is likely to function in some aspects of cellular RNA processing. This chain is RNA 3'-terminal phosphate cyclase, found in Escherichia coli O139:H28 (strain E24377A / ETEC).